A 459-amino-acid chain; its full sequence is MAPLCPSPWLPLLIPAPAPGLTVQLLLSLLLLVPVHPQRLPRMQEDSPLGGGSSGEDDPLGEEDLPSEEDSPREEDPPGEEDLPGEEDLPGEEDLPEVKPKSEEEGSLKLEDLPTVEAPGDPQEPQNNAHRDKEGDDQSHWRYGGDPPWPRVSPACAGRFQSPVDIRPQLAAFCPALRPLELLGFQLPPLPELRLRNNGHSVQLTLPPGLEMALGPGREYRALQLHLHWGAAGRPGSEHTVEGHRFPAEIHVVHLSTAFARVDEALGRPGGLAVLAAFLEEGPEENSAYEQLLSRLEEIAEEGSETQVPGLDISALLPSDFSRYFQYEGSLTTPPCAQGVIWTVFNQTVMLSAKQLHTLSDTLWGPGDSRLQLNFRATQPLNGRVIEASFPAGVDSSPRAAEPVQLNSCLAAGDILALVFGLLFAVTSVAFLVQMRRQHRRGTKGGVSYRPAEVAETGA.

Residues 1–37 form the signal peptide; that stretch reads MAPLCPSPWLPLLIPAPAPGLTVQLLLSLLLLVPVHP. The tract at residues 38-112 is proteoglycan-like (PG); that stretch reads QRLPRMQEDS…EEEGSLKLED (75 aa). Residues 38–414 are Extracellular-facing; it reads QRLPRMQEDS…QLNSCLAAGD (377 aa). The disordered stretch occupies residues 42 to 154; that stretch reads RMQEDSPLGG…GDPPWPRVSP (113 aa). Residues 55–95 are compositionally biased toward acidic residues; it reads GEDDPLGEEDLPSEEDSPREEDPPGEEDLPGEEDLPGEEDL. The segment covering 96 to 112 has biased composition (basic and acidic residues); it reads PEVKPKSEEEGSLKLED. O-linked (GlcNAc...) threonine glycosylation is present at threonine 115. Residues 129–140 show a composition bias toward basic and acidic residues; sequence AHRDKEGDDQSH. Residues 138-391 form a catalytic region; it reads QSHWRYGGDP…NGRVIEASFP (254 aa). The region spanning 139 to 390 is the Alpha-carbonic anhydrase domain; sequence SHWRYGGDPP…LNGRVIEASF (252 aa). The cysteines at positions 156 and 336 are disulfide-linked. Histidine 200 serves as the catalytic Proton donor/acceptor. 3 residues coordinate Zn(2+): histidine 226, histidine 228, and histidine 251. A substrate-binding site is contributed by 332 to 333; sequence TT. N-linked (GlcNAc...) asparagine glycosylation is present at asparagine 346. The helical transmembrane segment at 415–435 threads the bilayer; that stretch reads ILALVFGLLFAVTSVAFLVQM. Over 436-459 the chain is Cytoplasmic; that stretch reads RRQHRRGTKGGVSYRPAEVAETGA. Position 449 is a phosphotyrosine (tyrosine 449).

The protein belongs to the alpha-carbonic anhydrase family. In terms of assembly, forms oligomers linked by disulfide bonds. Requires Zn(2+) as cofactor. In terms of processing, asn-346 bears high-mannose type glycan structures. Expressed primarily in carcinoma cells lines. Expression is restricted to very few normal tissues and the most abundant expression is found in the epithelial cells of gastric mucosa.

The protein resides in the nucleus. It is found in the nucleolus. The protein localises to the cell membrane. Its subcellular location is the cell projection. It localises to the microvillus membrane. It catalyses the reaction hydrogencarbonate + H(+) = CO2 + H2O. Inhibited by coumarins, saccharin, sulfonamide derivatives such as acetazolamide (AZA) and Foscarnet (phosphonoformate trisodium salt). Its function is as follows. Catalyzes the interconversion between carbon dioxide and water and the dissociated ions of carbonic acid (i.e. bicarbonate and hydrogen ions). This Homo sapiens (Human) protein is Carbonic anhydrase 9 (CA9).